Reading from the N-terminus, the 552-residue chain is Putative E3 ubiquitin-protein ligase ARI6 (552 aa).

The tract at residues 129–343 (REFTCGICFE…GGYYACNRYE (215 aa)) is TRIAD supradomain. Zn(2+) is bound by residues cysteine 133, cysteine 136, cysteine 150, histidine 152, cysteine 155, cysteine 158, cysteine 178, cysteine 183, cysteine 222, cysteine 227, cysteine 245, cysteine 247, cysteine 252, cysteine 255, histidine 260, cysteine 265, cysteine 292, and cysteine 295. An RING-type 1 zinc finger spans residues 133–183 (CGICFESYPLEETISVSCGHPFCATCWTGYISTSINDGPGCLMLKCPYPCC). Residues 202 to 265 (ERYYRYFLRS…SEEAHRPVDC (64 aa)) form an IBR-type zinc finger. The RING-type 2; atypical zinc-finger motif lies at 292-322 (CPKCKRPIEKNHGCMHMTCTPPCKFEFCWLC). The active site involves cysteine 305. Positions 310, 314, 319, 322, 329, and 339 each coordinate Zn(2+). Residues 518-552 (HAASSKPANCKPSSNTKDGGKGKKEALTMAGSAET) form a disordered region. A compositionally biased stretch (polar residues) spans 519–534 (AASSKPANCKPSSNTK).

This sequence belongs to the RBR family. Ariadne subfamily. It depends on Zn(2+) as a cofactor.

The catalysed reaction is [E2 ubiquitin-conjugating enzyme]-S-ubiquitinyl-L-cysteine + [acceptor protein]-L-lysine = [E2 ubiquitin-conjugating enzyme]-L-cysteine + [acceptor protein]-N(6)-ubiquitinyl-L-lysine.. The protein operates within protein modification; protein ubiquitination. Functionally, might act as an E3 ubiquitin-protein ligase, or as part of E3 complex, which accepts ubiquitin from specific E2 ubiquitin-conjugating enzymes and then transfers it to substrates. The sequence is that of Putative E3 ubiquitin-protein ligase ARI6 (ARI6) from Arabidopsis thaliana (Mouse-ear cress).